The sequence spans 126 residues: Protein ApaG (126 aa).

One can recognise an ApaG domain in the interval 2–126; that stretch reads SALDTSIRVE…FRLATPGLLH (125 aa).

The sequence is that of Protein ApaG from Shewanella sp. (strain W3-18-1).